Reading from the N-terminus, the 162-residue chain is MELDLISYELDEKTKEGIEKVVEKFFTKAEPDLVLIFDKAGRILACKGMDISDTYSEFISSILSALFFASEELTSMLDKNDEMKDVFYETKNRVFLMARLEKDFLIGVISRKNLSLGSIRLFFNHLVSDLNAVLKNLKEVEKKSLKISKEELKKKLDQILGS.

Residues 129-161 are a coiled coil; sequence DLNAVLKNLKEVEKKSLKISKEELKKKLDQILG.

This is an uncharacterized protein from Aquifex aeolicus (strain VF5).